A 308-amino-acid polypeptide reads, in one-letter code: NADH-cytochrome b5 reductase 1 (308 aa).

A helical transmembrane segment spans residues 29–49 (VASSPAFLVAAAAIVIAAAFY). In terms of domain architecture, FAD-binding FR-type spans 64-167 (SIWKEFPLQK…KGPKGNFKYT (104 aa)). FAD is bound by residues 147–162 (ASLKIGDTLRVKGPKG) and 173–205 (HLGMIAGGTGLAPMIQIVRAILQNPPDRTNITL).

It belongs to the flavoprotein pyridine nucleotide cytochrome reductase family. Monomer. Component of the 2-(3-amino-3-carboxypropyl)histidine synthase complex composed of DPH1, DPH2, DPH3 and a NADH-dependent reductase, predominantly MCR1.1. FAD serves as cofactor.

It localises to the mitochondrion outer membrane. It carries out the reaction 2 Fe(III)-[cytochrome b5] + NADH = 2 Fe(II)-[cytochrome b5] + NAD(+) + H(+). It catalyses the reaction 2 Fe(3+)-[Dph3] + NADH = 2 Fe(2+)-[Dph3] + NAD(+) + H(+). The protein operates within protein modification; peptidyl-diphthamide biosynthesis. Functionally, NADH-dependent reductase for DPH3 and cytochrome b5. Required for the first step of diphthamide biosynthesis, a post-translational modification of histidine which occurs in elongation factor 2. DPH1 and DPH2 transfer a 3-amino-3-carboxypropyl (ACP) group from S-adenosyl-L-methionine (SAM) to a histidine residue, the reaction is assisted by a reduction system comprising DPH3 and a NADH-dependent reductase, predominantly MCR1.1. By reducing DPH3, also involved in the formation of the tRNA wobble base modification mcm5s 2U (5-methoxycarbonylmethyl-2-thiouridine), mediated by the elongator complex. The cytochrome b5/NADH cytochrome b5 reductase electron transfer system supports the catalytic activity of several sterol biosynthetic enzymes. The polypeptide is NADH-cytochrome b5 reductase 1 (MCR1.1) (Laccaria bicolor (strain S238N-H82 / ATCC MYA-4686) (Bicoloured deceiver)).